Here is a 246-residue protein sequence, read N- to C-terminus: Uridylate kinase (246 aa).

16-19 (KLGG) serves as a coordination point for ATP. A UMP-binding site is contributed by Gly57. Residues Gly58 and Arg62 each coordinate ATP. UMP contacts are provided by residues Asp77 and 138-145 (MGMPYFST). 2 residues coordinate ATP: Tyr171 and Asp174.

Belongs to the UMP kinase family. As to quaternary structure, homohexamer.

It is found in the cytoplasm. It catalyses the reaction UMP + ATP = UDP + ADP. It participates in pyrimidine metabolism; CTP biosynthesis via de novo pathway; UDP from UMP (UMPK route): step 1/1. Its activity is regulated as follows. Inhibited by UTP. In terms of biological role, catalyzes the reversible phosphorylation of UMP to UDP. The chain is Uridylate kinase from Corynebacterium jeikeium (strain K411).